The sequence spans 543 residues: Chaperonin GroEL (543 aa).

ATP contacts are provided by residues 29–32 (TLGP), 86–90 (DGTTT), glycine 413, 476–478 (NAA), and aspartate 492.

This sequence belongs to the chaperonin (HSP60) family. In terms of assembly, forms a cylinder of 14 subunits composed of two heptameric rings stacked back-to-back. Interacts with the co-chaperonin GroES.

The protein resides in the cytoplasm. It carries out the reaction ATP + H2O + a folded polypeptide = ADP + phosphate + an unfolded polypeptide.. Together with its co-chaperonin GroES, plays an essential role in assisting protein folding. The GroEL-GroES system forms a nano-cage that allows encapsulation of the non-native substrate proteins and provides a physical environment optimized to promote and accelerate protein folding. This Streptococcus pyogenes serotype M3 (strain SSI-1) protein is Chaperonin GroEL.